The chain runs to 60 residues: UPF0434 protein Ssed_2824 (60 aa).

Belongs to the UPF0434 family.

The polypeptide is UPF0434 protein Ssed_2824 (Shewanella sediminis (strain HAW-EB3)).